A 687-amino-acid polypeptide reads, in one-letter code: Follicle-stimulating hormone receptor (687 aa).

The signal sequence occupies residues 1 to 17; it reads MALLLVSLLAFLSLGSG. An LRRNT domain is found at 18–46; the sequence is CHHQVCHYSNRVFLCQESKVTEIPSDLPR. Residues 18-358 are Extracellular-facing; the sequence is CHHQVCHYSN…EDIMGYDILR (341 aa). A disulfide bridge connects residues cysteine 23 and cysteine 32. LRR repeat units lie at residues 49–72, 73–97, 98–118, 119–143, 144–169, 170–192, 193–216, 217–240, and 241–259; these read LELR…FGDL, KKIE…LPKL, HEIR…AFQN, LPNL…KIQS, LQKV…MGLS, FESM…AFNG, TQLD…VFQG, ASGP…GLEN, and LKKL…PSLE. N-linked (GlcNAc...) asparagine glycans are attached at residues asparagine 191 and asparagine 199. Disulfide bonds link cysteine 275/cysteine 338, cysteine 276/cysteine 292, cysteine 276/cysteine 348, and cysteine 292/cysteine 330. Asparagine 293 is a glycosylation site (N-linked (GlcNAc...) asparagine). Tyrosine 327 is subject to Sulfotyrosine. Residues 359–379 form a helical membrane-spanning segment; that stretch reads VLIWFISILAITGNIIVLVIL. The Cytoplasmic portion of the chain corresponds to 380-390; sequence ITSQYKLTVPR. Residues 391 to 413 traverse the membrane as a helical segment; it reads FLMCNLAFADLCIGIYLLLIASV. Residues 414–435 are Extracellular-facing; sequence DIHTKSQYHNYAIDWQTGAGCD. A disulfide bridge connects residues cysteine 434 and cysteine 509. A helical transmembrane segment spans residues 436–457; sequence AAGFFTVFGSELSVYTLTAITL. At 458–477 the chain is on the cytoplasmic side; the sequence is ERWHTITHAMQLECKVQLRH. A helical transmembrane segment spans residues 478–500; sequence AASVMLVGWIFGFGVGLLPIFGI. Residues 501 to 520 lie on the Extracellular side of the membrane; that stretch reads STYMKVSICLPMDIDSPLSQ. A helical membrane pass occupies residues 521–542; sequence LYVMSLLVLNVLAFVVICGCYT. Residues 543-565 are Cytoplasmic-facing; sequence HIYLTVRNPNIVSSSSDTKIAKR. A helical membrane pass occupies residues 566-589; that stretch reads MGILIFTDFLCMAPISFFGISASL. The Extracellular portion of the chain corresponds to 590–600; it reads KVALITVSKSK. The chain crosses the membrane as a helical span at residues 601–622; sequence ILLVLFYPINSCANPFLYAIFT. At 623–687 the chain is on the cytoplasmic side; it reads KNFRRDFFIL…LVPLSHLAQN (65 aa).

Belongs to the G-protein coupled receptor 1 family. FSH/LSH/TSH subfamily. As to quaternary structure, homotrimer. Functions as a homotrimer binding the FSH hormone heterodimer composed of CGA and FSHB. Interacts with ARRB2. Interacts with APPL2; interaction is independent of follicle stimulating hormone stimulation. In terms of processing, N-glycosylated; indirectly required for FSH-binding, possibly via a conformational change that allows high affinity binding of hormone. Post-translationally, sulfated.

The protein localises to the cell membrane. G protein-coupled receptor for follitropin, the follicle-stimulating hormone. Through cAMP production activates the downstream PI3K-AKT and ERK1/ERK2 signaling pathways. This Equus asinus (Donkey) protein is Follicle-stimulating hormone receptor (FSHR).